We begin with the raw amino-acid sequence, 1826 residues long: ATPase family AAA domain-containing protein 5 (1826 aa).

Phosphoserine is present on Ser44. Lys127 is covalently cross-linked (Glycyl lysine isopeptide (Lys-Gly) (interchain with G-Cter in SUMO2)). Disordered regions lie at residues 170–254, 282–311, 323–367, 398–572, 588–623, 647–684, and 709–729; these read SIED…KRAD, PAVPACVPSGPGEAVKSGSEGELSGSCEPS, AQVH…RKSN, QQFM…EPGS, RSCSTPATNALGGTESEDAQDTIPVKASTPKSARTS, KFTRISTPKKSKKSSKKSETTEEELTSQKKKANSTSKN, and VVPLRRSSRHQARSAKEKSPE. Ser215 bears the Phosphoserine mark. Over residues 243-254 the composition is skewed to basic and acidic residues; sequence NDSRTHATKRAD. Residues 298 to 311 show a composition bias toward low complexity; the sequence is SGSEGELSGSCEPS. 2 positions are modified to phosphoserine: Ser351 and Ser366. The segment at 365 to 381 is interaction with WDR48; it reads KSNVVIQEGQLELAVLE. A compositionally biased stretch (basic and acidic residues) spans 418-442; sequence KPLEKQKDPSEKSVHEGDSSSEKII. Polar residues predominate over residues 445-456; that stretch reads PNIQRVSSQGCL. Positions 459–468 are enriched in basic and acidic residues; the sequence is HADRGSFPKE. Positions 469-481 are enriched in basic residues; that stretch reads KSKKPNKKGKKTR. The span at 487-505 shows a compositional bias: basic and acidic residues; the sequence is NREENIQKEKTAFSLKDEQ. The segment covering 540-559 has biased composition (polar residues); that stretch reads DSVQMSLCNRNKSRSSSTPT. Ser591 and Ser603 each carry phosphoserine. A phosphoserine mark is found at Ser727 and Ser801. The segment at 965 to 1034 is disordered; that stretch reads GKQASPQLQP…NLDPSRDSGT (70 aa). Residues 1006-1019 are compositionally biased toward basic and acidic residues; it reads EEMKGRSKDLDERI. Ser1104 bears the Phosphoserine mark. 1119-1126 is a binding site for ATP; it reads GPTGVGKT. Residues 1183-1216 form a disordered region; it reads YNIGKSPKKLNSPGKVVTSPRKLPPSSPKTSGQK. An LXCXE motif motif is present at residues 1415-1419; sequence LVCSE. 2 disordered regions span residues 1527–1552 and 1592–1611; these read PASMGHLTRKQSKDQPLRKSQKRKQK and SNPEIKTQNSGFKPHSVPQP. An interaction with RAD51 and RFC5 region spans residues 1612 to 1701; that stretch reads PKTLAEKKCC…ATAEALSFTE (90 aa).

Belongs to the AAA ATPase family. As to quaternary structure, component of a heteropentameric replication factor ATAD5 RFC-like complex composed of one large subunit (ATAD5) and four small subunits (RFC2, RFC3, RFC4 and RFC5). Within the ATAD5 RFC-like complex, interacts with RFC2, RFC4 and RFC5. Within the ATAD5 RFC-like complex, interacts directly via-N terminal with RAD51; the interactions is enhanced under replication stress. Interacts with RB1 predominantly in G1 phase via its LXCXE motif. Interacts with RAD9A in growing cells. The interaction with RAD9A is reduced after exposure to DNA replication-inhibiting agents. Interacts with BRD4. Interacts with PCNA. Interacts with deubiquitinating enzyme USP1, and its associated factor, WDR48. ATR may stimulate the RAD9A dissociation. As to expression, expressed ubiquitously in all cell lines like teratocarcinoma, cell lymphoma, lymphoma.

It is found in the nucleus. Functionally, has an important role in DNA replication and in maintaining genome integrity during replication stress. Involved in a RAD9A-related damage checkpoint, a pathway that is important in determining whether DNA damage is compatible with cell survival or whether it requires cell elimination by apoptosis. Modulates the RAD9A interaction with BCL2 and thereby induces DNA damage-induced apoptosis. Promotes PCNA deubiquitination by recruiting the ubiquitin-specific protease 1 (USP1) and WDR48 thereby down-regulating the error-prone damage bypass pathway. As component of the ATAD5 RFC-like complex, regulates the function of the DNA polymerase processivity factor PCNA by unloading the ring-shaped PCNA homotrimer from DNA after replication during the S phase of the cell cycle. This seems to be dependent on its ATPase activity. Plays important roles in restarting stalled replication forks under replication stress, by unloading the PCNA homotrimer from DNA and recruiting RAD51 possibly through an ATR-dependent manner. Ultimately this enables replication fork regression, breakage, and eventual fork restart. Both the PCNA unloading activity and the interaction with WDR48 are required to efficiently recruit RAD51 to stalled replication forks. Promotes the generation of MUS81-mediated single-stranded DNA-associated breaks in response to replication stress, which is an alternative pathway to restart stalled/regressed replication forks. The protein is ATPase family AAA domain-containing protein 5 (Atad5) of Mus musculus (Mouse).